Reading from the N-terminus, the 267-residue chain is uncharacterized protein (267 aa).

Ser210 and Ser224 each carry phosphoserine.

Testis. Down-regulated in men with spermatocyte arrest.

Functionally, essential for normal spermatogenesis and male fertility. This is an uncharacterized protein from Homo sapiens (Human).